Reading from the N-terminus, the 68-residue chain is uncharacterized protein (68 aa).

2 helical membrane-spanning segments follow: residues 1-21 (MLFIPPPLLCLFIAIAMYFLP) and 28-48 (VHFSVIVFVISLSFLIALSSV).

The protein localises to the cell membrane. This is an uncharacterized protein from Haemophilus influenzae (strain ATCC 51907 / DSM 11121 / KW20 / Rd).